We begin with the raw amino-acid sequence, 275 residues long: Chlorobenzene dihydrodiol dehydrogenase (275 aa).

Catalysis depends on Tyr-155, which acts as the Proton acceptor.

It belongs to the short-chain dehydrogenases/reductases (SDR) family.

The catalysed reaction is (1R,2R)-3-chlorocyclohexa-3,5-diene-1,2-diol + NAD(+) = 3-chlorocatechol + NADH + H(+). The protein operates within aromatic compound metabolism. Its function is as follows. Can transform various dihydrodiols of chlorobenzenes and chlorotoluenes into the respective catechols. This Cupriavidus sp. (strain PS12) protein is Chlorobenzene dihydrodiol dehydrogenase.